Here is a 143-residue protein sequence, read N- to C-terminus: Transcriptional regulator SlyA (143 aa).

The HTH marR-type domain maps to 2 to 135 (ESTLGSDLAR…LSTLVQKLEQ (134 aa)). A DNA-binding region (H-T-H motif) is located at residues 49–72 (QIQLAKAIGIEQPSLVRTLDQLEE).

It belongs to the SlyA family. As to quaternary structure, homodimer.

Transcription regulator that can specifically activate or repress expression of target genes. Regulates the cpm operon, which contains cpmA, cpmB, cpmC, cpmD, cpmE, cpmF, cpmG and cpmH, involved in carbapenem-like antibiotic production. The chain is Transcriptional regulator SlyA from Photorhabdus laumondii subsp. laumondii (strain DSM 15139 / CIP 105565 / TT01) (Photorhabdus luminescens subsp. laumondii).